The primary structure comprises 465 residues: Cysteine--tRNA ligase (465 aa).

Cys-27 serves as a coordination point for Zn(2+). Positions 29–39 (PTVYDDAHLGH) match the 'HIGH' region motif. 3 residues coordinate Zn(2+): Cys-207, His-237, and Glu-241. The short motif at 269 to 273 (KMSKS) is the 'KMSKS' region element. Lys-272 contributes to the ATP binding site.

It belongs to the class-I aminoacyl-tRNA synthetase family. In terms of assembly, monomer. Zn(2+) is required as a cofactor.

The protein localises to the cytoplasm. The catalysed reaction is tRNA(Cys) + L-cysteine + ATP = L-cysteinyl-tRNA(Cys) + AMP + diphosphate. This chain is Cysteine--tRNA ligase, found in Helicobacter pylori (strain G27).